Consider the following 54-residue polypeptide: Sec-independent protein translocase protein TatA (54 aa).

Residues 1 to 21 (MGMSFSHLLIVLLIIFVLFGA) form a helical membrane-spanning segment.

Belongs to the TatA/E family. The Tat system comprises two distinct complexes: a TatABC complex, containing multiple copies of TatA, TatB and TatC subunits, and a separate TatA complex, containing only TatA subunits. Substrates initially bind to the TatABC complex, which probably triggers association of the separate TatA complex to form the active translocon.

Its subcellular location is the cell inner membrane. Part of the twin-arginine translocation (Tat) system that transports large folded proteins containing a characteristic twin-arginine motif in their signal peptide across membranes. TatA could form the protein-conducting channel of the Tat system. The polypeptide is Sec-independent protein translocase protein TatA (Rickettsia prowazekii (strain Madrid E)).